The primary structure comprises 533 residues: Inositol-3-phosphate synthase (533 aa).

Residue T48 is modified to Phosphothreonine. 5 residues coordinate NAD(+): G74, G75, N76, N77, and D148. Residues S177 and S184 each carry the phosphoserine modification. Residues S184, I185, Q195, D196, R198, T244, A245, N246, T247, G295, S296, D320, L321, S323, N354, N355, and D356 each coordinate NAD(+). S296 is subject to Phosphoserine. S368 is subject to Phosphoserine. Residue K369 participates in NAD(+) binding. At S374 the chain carries Phosphoserine. Residues G409, D410, D438, and S439 each contribute to the NAD(+) site.

The protein belongs to the myo-inositol 1-phosphate synthase family. As to quaternary structure, homotetramer. NAD(+) serves as cofactor. Post-translationally, phosphorylation at Ser-184 and Ser-374 is associated with a decrease in activity. Increasingly phosphorylated in presence of valproate.

Its subcellular location is the cytoplasm. The enzyme catalyses D-glucose 6-phosphate = 1D-myo-inositol 3-phosphate. Its pathway is polyol metabolism; myo-inositol biosynthesis; myo-inositol from D-glucose 6-phosphate: step 1/2. Its activity is regulated as follows. Competitively inhibited by myo-2-inosose 1-phosphate, which is also an intermediate in the catalytic reaction. Competitively inhibited by 2-deoxy-myo-inositol 1-phosphate (dMIP), 1-deoxy-1-(phosphonomethyl)-myo-2-inosose (DPMI), dihydroxyacetone phosphate (DHAP), 6-deoxy-D-glucose 6-(E)-vinylhomophosphonate, 6-deoxy-D-glucitol 6-(E)-vinylhomophosphonate, 2,6-dideoxy-D-glucose 6-(E)-vinylhomophosphonate and 2,6-dideoxy-D-glucitol 6-(E)-vinylhomophosphonate. Inhibited by 2-deoxyglucitol 6-phosphate (dgtolP). Its function is as follows. Key enzyme in myo-inositol biosynthesis pathway that catalyzes the conversion of glucose 6-phosphate to 1-myo-inositol 1-phosphate in a NAD-dependent manner. Rate-limiting enzyme in the synthesis of all inositol-containing compounds. In Saccharomyces cerevisiae (strain ATCC 204508 / S288c) (Baker's yeast), this protein is Inositol-3-phosphate synthase (INO1).